The chain runs to 211 residues: Dephospho-CoA kinase (211 aa).

Residues Ile-2–Lys-204 enclose the DPCK domain. Gly-10–Thr-15 provides a ligand contact to ATP.

Belongs to the CoaE family.

Its subcellular location is the cytoplasm. The enzyme catalyses 3'-dephospho-CoA + ATP = ADP + CoA + H(+). Its pathway is cofactor biosynthesis; coenzyme A biosynthesis; CoA from (R)-pantothenate: step 5/5. Its function is as follows. Catalyzes the phosphorylation of the 3'-hydroxyl group of dephosphocoenzyme A to form coenzyme A. This Rhodospirillum rubrum (strain ATCC 11170 / ATH 1.1.1 / DSM 467 / LMG 4362 / NCIMB 8255 / S1) protein is Dephospho-CoA kinase.